Here is a 471-residue protein sequence, read N- to C-terminus: Putative multidrug resistance protein MdtD (471 aa).

Residues 1–11 lie on the Periplasmic side of the membrane; it reads MTDLPDSTRWQ. The chain crosses the membrane as a helical span at residues 12–32; it reads LWIVAFGFFMQSLDTTIVNTA. At 33-48 the chain is on the cytoplasmic side; sequence LPSMAQSLGESPLHMH. The helical transmembrane segment at 49 to 69 threads the bilayer; that stretch reads MVIVSYVLTVAVMLPASGWLA. Residues 70-76 are Periplasmic-facing; it reads DKVGVRN. Residues 77–97 form a helical membrane-spanning segment; it reads IFFTAIVLFTLGSLFCALSGT. Over 98-101 the chain is Cytoplasmic; sequence LNEL. The chain crosses the membrane as a helical span at residues 102–124; it reads LLARALQGVGGAMMVPVGRLTVM. Topologically, residues 125–137 are periplasmic; the sequence is KIVPREQYMAAMT. The helical transmembrane segment at 138 to 158 threads the bilayer; that stretch reads FVTLPGQVGPLLGPALGGLLV. Residues 159–164 are Cytoplasmic-facing; the sequence is EYASWH. A helical membrane pass occupies residues 165–185; sequence WIFLINIPVGIIGAIATLMLM. The Periplasmic portion of the chain corresponds to 186–196; sequence PNYTMQTRRFD. Residues 197–217 traverse the membrane as a helical segment; the sequence is LSGFLLLAVGMAVLTLALDGS. Residues 218-224 lie on the Cytoplasmic side of the membrane; that stretch reads KGTGLSP. Residues 225 to 245 form a helical membrane-spanning segment; the sequence is LAITGLVAVGVVALVLYLLHA. Topologically, residues 246–262 are periplasmic; it reads RNNNRALFSLKLFRTRT. A helical membrane pass occupies residues 263–283; sequence FSLGLAGSFAGRIGSGMLPFM. At 284–285 the chain is on the cytoplasmic side; it reads TP. A helical membrane pass occupies residues 286–306; the sequence is VFLQIGLGFSPFHAGLMMIPM. Residues 307–341 lie on the Periplasmic side of the membrane; it reads VLGSMGMKRIVVQVVNRFGYRRVLVATTLGLSLVT. The helical transmembrane segment at 342 to 362 threads the bilayer; that stretch reads LLFMTTALLGWYYVLPFVLFL. The Cytoplasmic portion of the chain corresponds to 363–395; it reads QGMVNSTRFSSMNTLTLKDLPDNLASSGNSLLS. Residues 396–416 traverse the membrane as a helical segment; that stretch reads MIMQLSMSIGVTIAGLLLGLF. Residues 417–430 are Periplasmic-facing; the sequence is GSQHVSVDSSTTQT. Residues 431-451 traverse the membrane as a helical segment; the sequence is VFMYTWLSMAFIIALPAFIFA. Over 452–471 the chain is Cytoplasmic; that stretch reads RVPNDTHQNVAISRRKRSAQ.

This sequence belongs to the major facilitator superfamily. TCR/Tet family.

Its subcellular location is the cell inner membrane. The chain is Putative multidrug resistance protein MdtD from Escherichia coli O157:H7.